The sequence spans 116 residues: Large ribosomal subunit protein bL17 (116 aa).

It belongs to the bacterial ribosomal protein bL17 family. Part of the 50S ribosomal subunit. Contacts protein L32.

This is Large ribosomal subunit protein bL17 from Sulfurimonas denitrificans (strain ATCC 33889 / DSM 1251) (Thiomicrospira denitrificans (strain ATCC 33889 / DSM 1251)).